A 352-amino-acid polypeptide reads, in one-letter code: C-C chemokine receptor type 5 (352 aa).

Residues 1–30 lie on the Extracellular side of the membrane; sequence MDYQVSSPTYDIDYYTSEPCQKINVKQIAA. Sulfotyrosine is present on Tyr-3. Residues Ser-6 and Ser-7 are each glycosylated (O-linked (GalNAc...) serine). Residues Tyr-10, Tyr-14, and Tyr-15 each carry the sulfotyrosine modification. 2 cysteine pairs are disulfide-bonded: Cys-20–Cys-269 and Cys-101–Cys-178. Residues 31-58 traverse the membrane as a helical segment; sequence RLLPPLYSLVFIFGFVGNILVVLILINC. The Cytoplasmic portion of the chain corresponds to 59 to 68; that stretch reads KRLKSMTDIY. A helical transmembrane segment spans residues 69–89; sequence LLNLAISDLLFLLTVPFWAHY. At 90-102 the chain is on the extracellular side; sequence AAAQWNFGNTMCQ. The helical transmembrane segment at 103 to 124 threads the bilayer; it reads LLTGLYFIGFFSGIFFIILLTI. Residues 125-141 lie on the Cytoplasmic side of the membrane; that stretch reads DRYLAIVHAVFALKART. The helical transmembrane segment at 142-166 threads the bilayer; it reads VTFGVVTSVITWVVAVFASLPGIIF. Residues 167–198 are Extracellular-facing; the sequence is TRYQREGLHYTCSSHFPYSQYQFWKNFQTLKI. Residues 199-218 traverse the membrane as a helical segment; the sequence is VILGLVLPLLVMVICYSGIL. The Cytoplasmic segment spans residues 219 to 235; it reads KTLLRCRNEKKRHRAVR. Residues 236–260 form a helical membrane-spanning segment; it reads LIFTIMIVYFLFWAPYNIVLLLNTF. The Extracellular segment spans residues 261–277; that stretch reads QEFFGLNNCSSSNRLDQ. The helical transmembrane segment at 278–301 threads the bilayer; that stretch reads AMQVTETLGMTHCCINPIIYAFVG. Topologically, residues 302–352 are cytoplasmic; the sequence is EKFRNYLLVFFQKHIAKRFCKCCSIFQQEAPERASSVYTRSTGEQETSVGL. Residues Cys-321, Cys-323, and Cys-324 are each lipidated (S-palmitoyl cysteine). Phosphoserine; by BARK1 is present on residues Ser-336, Ser-337, Ser-342, and Ser-349.

This sequence belongs to the G-protein coupled receptor 1 family. In terms of assembly, interacts with PRAF2. Efficient ligand binding to CCL3/MIP-1alpha and CCL4/MIP-1beta requires sulfation, O-glycosylation and sialic acid modifications. Glycosylation on Ser-6 is required for efficient binding of CCL4. Interacts with GRK2. Interacts with ARRB1 and ARRB2. Interacts with CNIH4. Interacts with S100A4; this interaction stimulates T-lymphocyte chemotaxis. Post-translationally, sulfated on at least 2 of the N-terminal tyrosines. Sulfation is required for efficient binding of the chemokines, CCL3 and CCL4. In terms of processing, palmitoylation in the C-terminal is important for cell surface expression. Phosphorylation on serine residues in the C-terminal is stimulated by binding CC chemokines especially by APO-RANTES. Post-translationally, O-glycosylated, but not N-glycosylated. Ser-6 appears to be the major site even if Ser-7 may be also O-glycosylated. Also sialylated glycans present which contribute to chemokine binding. Thr-16 and Ser-17 may also be glycosylated and, if so, with small moieties such as a T-antigen.

It is found in the cell membrane. Its function is as follows. Receptor for a number of inflammatory CC-chemokines including CCL3/MIP-1-alpha, CCL4/MIP-1-beta and RANTES and subsequently transduces a signal by increasing the intracellular calcium ion level. May play a role in the control of granulocytic lineage proliferation or differentiation. Participates in T-lymphocyte migration to the infection site by acting as a chemotactic receptor. The sequence is that of C-C chemokine receptor type 5 (CCR5) from Erythrocebus patas (Red guenon).